A 271-amino-acid chain; its full sequence is MTKTELKPILVFDSGIGGLTVLREARVLMPERHFIYVADDAGFPYGGWEEGALKERVIALFGRLLAEHDPEICIIACNTAFTLVGADLRIVYPQMTFVGTVPAIKPAAERTRSGLVSVLATPGTVKRAYTRDLIQSFASQCHVRLVGSENLARMAEAYIRGEALTDDAVRAEIAPCFVEVDGKRTDIVVLACTHYPFVANVFRRLAPWPVDWLDPAEAIARRARSLVPLPNGFEPLNGEDPAIFTSGKPDFATRRLMQGFGLKVAAVGSLG.

Substrate-binding positions include 13–14 (DS) and 45–46 (YG). Cys-77 (proton donor/acceptor) is an active-site residue. Residue 78–79 (NT) coordinates substrate. Cys-192 acts as the Proton donor/acceptor in catalysis. 193-194 (TH) serves as a coordination point for substrate.

Belongs to the aspartate/glutamate racemases family.

It carries out the reaction L-glutamate = D-glutamate. The protein operates within cell wall biogenesis; peptidoglycan biosynthesis. Functionally, provides the (R)-glutamate required for cell wall biosynthesis. The sequence is that of Glutamate racemase from Sinorhizobium medicae (strain WSM419) (Ensifer medicae).